A 342-amino-acid chain; its full sequence is GTPase Obg (342 aa).

One can recognise an Obg domain in the interval 1–159 (MKFLDLCKVY…RTIWLRLKLI (159 aa)). The OBG-type G domain maps to 160 to 327 (ADAGLLGLPN…VLRALWAEID (168 aa)). GTP contacts are provided by residues 166 to 173 (GLPNAGKS), 191 to 195 (FTTLV), 212 to 215 (DIPG), 279 to 282 (NKID), and 308 to 310 (SGV). Mg(2+)-binding residues include Ser-173 and Thr-193.

Belongs to the TRAFAC class OBG-HflX-like GTPase superfamily. OBG GTPase family. Monomer. Mg(2+) is required as a cofactor.

The protein localises to the cytoplasm. Its function is as follows. An essential GTPase which binds GTP, GDP and possibly (p)ppGpp with moderate affinity, with high nucleotide exchange rates and a fairly low GTP hydrolysis rate. Plays a role in control of the cell cycle, stress response, ribosome biogenesis and in those bacteria that undergo differentiation, in morphogenesis control. In Cereibacter sphaeroides (strain ATCC 17025 / ATH 2.4.3) (Rhodobacter sphaeroides), this protein is GTPase Obg.